The primary structure comprises 571 residues: Cilia- and flagella-associated protein 52 (571 aa).

WD repeat units follow at residues 62 to 106 (GHGN…LLAR), 109 to 150 (LHKG…AICG), 156 to 195 (LNVG…RKIW), 288 to 327 (QSQG…ETLI), 330 to 364 (CHFE…TSSN), 366 to 405 (AHRI…QKLE), 410 to 449 (EHKS…RNQM), 451 to 490 (LANT…VIRE), 494 to 533 (SLSG…VTHV), and 536 to 571 (GHSG…PYTS).

The protein belongs to the CFAP52 family. As to quaternary structure, microtubule inner protein component of sperm flagellar doublet microtubules. Interacts with BRCA2. Interacts with the CCT chaperonin complex. Interacts with HSP70. Interacts with AK8. Interacts with CFAP45. Interacts with DNAI1. Interacts with IQDC.

The protein resides in the cytoplasm. Its subcellular location is the cytoskeleton. It is found in the cilium axoneme. It localises to the flagellum axoneme. Its function is as follows. Microtubule inner protein (MIP) part of the dynein-decorated doublet microtubules (DMTs) in cilia axoneme. Important for proper ciliary and flagellar beating. May act in cooperation with CFAP45 and axonemal dynein subunit DNAH11. May play a role in cell growth and/or survival. In Macaca fascicularis (Crab-eating macaque), this protein is Cilia- and flagella-associated protein 52.